Reading from the N-terminus, the 70-residue chain is Small ribosomal subunit protein bS21B (70 aa).

The protein belongs to the bacterial ribosomal protein bS21 family.

This Cupriavidus metallidurans (strain ATCC 43123 / DSM 2839 / NBRC 102507 / CH34) (Ralstonia metallidurans) protein is Small ribosomal subunit protein bS21B.